We begin with the raw amino-acid sequence, 201 residues long: MAQGPSQCPALLGAPASTTDGTQEARVPLDGAFWIPRPPAGSPKGCFACVSKPPALQAAAAPAPEPSASPPMAPTLFPMESKSSKTDSVRASGVPQACKHLAEKKTMTNPTTVIEVYPDTTEVNDYYLWSIFNFVYLNFCCLGFIALAYSLKVRDKKLLNDLNGAVEDAKTARLFNITSSALAASCIILIFIFLRYPLTDY.

Disordered stretches follow at residues 1-23 and 60-88; these read MAQG…DGTQ and AAPA…KTDS. Residues 1 to 127 lie on the Extracellular side of the membrane; sequence MAQGPSQCPA…PDTTEVNDYY (127 aa). Over residues 63–73 the composition is skewed to pro residues; sequence APEPSASPPMA. The helical transmembrane segment at 128–148 threads the bilayer; sequence LWSIFNFVYLNFCCLGFIALA. Residues C140 and C141 are each lipidated (S-palmitoyl cysteine). Over 149–173 the chain is Cytoplasmic; sequence YSLKVRDKKLLNDLNGAVEDAKTAR. The chain crosses the membrane as a helical span at residues 174–194; sequence LFNITSSALAASCIILIFIFL. Residues 195 to 201 are Extracellular-facing; sequence RYPLTDY.

It belongs to the CD225/Dispanin family.

The protein localises to the cell membrane. This chain is Interferon-induced transmembrane protein 10 (Ifitm10), found in Mus musculus (Mouse).